The sequence spans 432 residues: Alcohol acyltransferase 9 (432 aa).

Residues histidine 156 and aspartate 379 each act as proton acceptor in the active site.

Belongs to the plant acyltransferase family.

It carries out the reaction 2-(methylsulfanyl)acetyl-CoA + butan-1-ol = butyl 2-(methylsulfanyl)acetate + CoA. It catalyses the reaction ethanol + acetyl-CoA = ethyl acetate + CoA. The catalysed reaction is butan-1-ol + acetyl-CoA = butyl acetate + CoA. The enzyme catalyses butan-1-ol + propanoyl-CoA = butyl propanoate + CoA. In terms of biological role, involved in the biosynthesis of volatile esters which confer kiwifruit flavor. Alcohol acyl transferase that can use a wide range of alcohols as substrate to produce esters. Exhibits acetyl-CoA:alcohol O-acyltransferase activity. This is Alcohol acyltransferase 9 from Actinidia chinensis var. chinensis (Chinese soft-hair kiwi).